The chain runs to 219 residues: Antigen 5 like allergen Cul n 1 (219 aa).

The N-terminal stretch at 1 to 19 is a signal peptide; the sequence is MIKKLSIVILFSCISFVLS. Disulfide bonds link Cys-23-Cys-45, Cys-28-Cys-124, and Cys-55-Cys-117. Positions 73–211 constitute an SCP domain; that stretch reads LKVHNRLRNK…RHSGNKYFFW (139 aa).

It belongs to the CRISP family. In terms of tissue distribution, expressed in salivary glands.

Its subcellular location is the secreted. This is Antigen 5 like allergen Cul n 1 from Culicoides nubeculosus (Biting midge).